The following is a 354-amino-acid chain: 3-dehydroquinate synthase (354 aa).

NAD(+) contacts are provided by residues 100–104 (GATGD), 124–125 (TT), Lys-136, Lys-145, and 163–166 (FLKT). Glu-178, His-242, and His-256 together coordinate Zn(2+).

This sequence belongs to the sugar phosphate cyclases superfamily. Dehydroquinate synthase family. The cofactor is NAD(+). Requires Co(2+) as cofactor. It depends on Zn(2+) as a cofactor.

It localises to the cytoplasm. The enzyme catalyses 7-phospho-2-dehydro-3-deoxy-D-arabino-heptonate = 3-dehydroquinate + phosphate. Its pathway is metabolic intermediate biosynthesis; chorismate biosynthesis; chorismate from D-erythrose 4-phosphate and phosphoenolpyruvate: step 2/7. Its function is as follows. Catalyzes the conversion of 3-deoxy-D-arabino-heptulosonate 7-phosphate (DAHP) to dehydroquinate (DHQ). In Staphylococcus aureus (strain MSSA476), this protein is 3-dehydroquinate synthase.